We begin with the raw amino-acid sequence, 310 residues long: Haloalkane dehalogenase (310 aa).

One can recognise an AB hydrolase-1 domain in the interval 49-295 (VFLCLHGEPT…DAGHFVQEFG (247 aa)). The active-site Nucleophile is Asp-124. Residues Trp-125 and Trp-175 each coordinate chloride. Catalysis depends on Asp-260, which acts as the Proton donor. His-289 acts as the Proton acceptor in catalysis.

The protein belongs to the haloalkane dehalogenase family. Type 1 subfamily. As to quaternary structure, monomer.

It catalyses the reaction 1-haloalkane + H2O = a halide anion + a primary alcohol + H(+). It carries out the reaction 1,2-dichloroethane + H2O = 2-chloroethanol + chloride + H(+). It functions in the pathway xenobiotic degradation; 1,2-dichloroethane degradation; glycolate from 1,2-dichloroethane: step 1/4. With respect to regulation, inhibited by thiol reagents such as p-chloromercuribenzoate and iodoacetamide. In terms of biological role, catalyzes hydrolytic cleavage of carbon-halogen bonds in halogenated aliphatic compounds, leading to the formation of the corresponding primary alcohols, halide ions and protons. Has a broad substrate specificity, which includes terminally mono- and di- chlorinated and brominated alkanes (up to C4 only). The highest activity was found with 1,2-dichloroethane, 1,3-dichloropropane, and 1,2-dibromoethane. The sequence is that of Haloalkane dehalogenase (dhlA) from Xanthobacter autotrophicus.